Consider the following 803-residue polypeptide: Spondin-1 (803 aa).

An N-terminal signal peptide occupies residues 1–23 (MGLIFQPLFWQYVATSYALMVLG). Positions 24-190 (FLDETVEKAI…DLTLEGGNEK (167 aa)) constitute a Reelin domain. Cystine bridges form between Cys-39-Cys-124, Cys-152-Cys-178, Cys-195-Cys-331, Cys-196-Cys-335, Cys-198-Cys-409, Cys-437-Cys-474, Cys-448-Cys-483, Cys-453-Cys-488, Cys-496-Cys-532, Cys-507-Cys-511, Cys-542-Cys-548, Cys-553-Cys-589, Cys-564-Cys-568, and Cys-599-Cys-604. One can recognise a Spondin domain in the interval 191–383 (TIPDCCACGT…LTSLDHPQSP (193 aa)). The N-linked (GlcNAc...) asparagine glycan is linked to Asn-210. Ca(2+)-binding residues include Asp-320, Asp-349, and Asp-353. The disordered stretch occupies residues 353–389 (DSGVTYESPNKPTIPQDKIRPLTSLDHPQSPSMTRGG). Positions 354–365 (SGVTYESPNKPT) are enriched in polar residues. TSP type-1 domains lie at 436–489 (TCIY…PGCS), 495–549 (TCMM…EECE), 552–605 (SCIV…PECH), 608–662 (PCVL…PECP), and 664–717 (SCEL…RKCQ). Asn-677 carries an N-linked (GlcNAc...) asparagine glycan. The segment at 722 to 741 (NERRHLKDAREKRRSEKIKE) is disordered. The TSP type-1 6 domain occupies 750–802 (VCKMKPWTAWTECTKFCGGGIQERFMTVKKRFKSSQFTSCKDKKEIRACNVHP).

As to expression, expressed at high levels in the floor plate.

Its subcellular location is the secreted. The protein localises to the extracellular space. It localises to the extracellular matrix. Promotes the attachment of spinal cord and sensory neuron cells and the outgrowth of neurites in vitro. May contribute to the growth and guidance of axons in both the spinal cord and the PNS. The chain is Spondin-1 (spon1) from Xenopus laevis (African clawed frog).